Here is a 549-residue protein sequence, read N- to C-terminus: Glucose-6-phosphate isomerase (549 aa).

N6-acetyllysine occurs at positions 80, 228, and 234. Glu-355 acts as the Proton donor in catalysis. Residues His-386 and Lys-514 contribute to the active site.

Belongs to the GPI family.

The protein localises to the cytoplasm. The catalysed reaction is alpha-D-glucose 6-phosphate = beta-D-fructose 6-phosphate. It functions in the pathway carbohydrate biosynthesis; gluconeogenesis. It participates in carbohydrate degradation; glycolysis; D-glyceraldehyde 3-phosphate and glycerone phosphate from D-glucose: step 2/4. Catalyzes the reversible isomerization of glucose-6-phosphate to fructose-6-phosphate. The sequence is that of Glucose-6-phosphate isomerase from Escherichia coli O139:H28 (strain E24377A / ETEC).